Here is a 132-residue protein sequence, read N- to C-terminus: Large-conductance mechanosensitive channel (132 aa).

2 helical membrane-spanning segments follow: residues 11-31 (FISRGNALDLAVGVVIGGAFG) and 75-95 (GSFLQAVFDFVIIAFAIFLLV).

Belongs to the MscL family. In terms of assembly, homopentamer.

The protein localises to the cell inner membrane. In terms of biological role, channel that opens in response to stretch forces in the membrane lipid bilayer. May participate in the regulation of osmotic pressure changes within the cell. The protein is Large-conductance mechanosensitive channel of Synechococcus sp. (strain JA-3-3Ab) (Cyanobacteria bacterium Yellowstone A-Prime).